Here is a 577-residue protein sequence, read N- to C-terminus: Arginine--tRNA ligase (577 aa).

The 'HIGH' region motif lies at 122–132; that stretch reads PNVAKEMHVGH.

The protein belongs to the class-I aminoacyl-tRNA synthetase family. As to quaternary structure, monomer.

It localises to the cytoplasm. The enzyme catalyses tRNA(Arg) + L-arginine + ATP = L-arginyl-tRNA(Arg) + AMP + diphosphate. The chain is Arginine--tRNA ligase from Escherichia coli O8 (strain IAI1).